The sequence spans 404 residues: CD209 antigen (404 aa).

The Cytoplasmic portion of the chain corresponds to 1–37 (MSDSKEPSVQQLGLLEEEQLRGLGFRQTRGYKSLAGC). 3 consecutive short sequence motifs (endocytosis signal) follow at residues 14–15 (LL), 16–18 (EEE), and 31–34 (YKSL). Residues 38–58 (LGHGALVLQLLSFTLLAGLLI) traverse the membrane as a helical; Signal-anchor for type II membrane protein segment. Over 59-404 (QVSKFPSSIS…APATPNPPPA (346 aa)) the chain is Extracellular. N-linked (GlcNAc...) asparagine glycosylation occurs at asparagine 80. Repeat copies occupy residues 96–118 (KLQE…PEKS), 119–141 (KQQE…PEKS), 142–164 (KQQE…PEKS), 165–187 (KQQE…PEKS), 188–210 (QQQE…PEKS), 211–233 (KQQE…PEKS), and 234–257 (KQQE…RPCP). The segment at 96-257 (KLQEIYQELT…AVERLCRPCP (162 aa)) is 7 X approximate tandem repeats. Disulfide bonds link cysteine 256–cysteine 267, cysteine 284–cysteine 377, and cysteine 356–cysteine 369. Residues 263–378 (FQGNCYFMSN…CNLAKFWICK (116 aa)) enclose the C-type lectin domain. Ca(2+) contacts are provided by glutamate 347, asparagine 349, valine 351, glutamate 354, asparagine 365, and aspartate 366.

In terms of assembly, homotetramer. Interacts with C1QBP; the interaction is indicative for a C1q:C1QBP:CD209 signaling complex. Interacts with ICAM2 and ICAM3 by binding to mannose-like carbohydrates. Interacts (via C-type lectin domain) with CEACAM1 (via Lewis X moieties); this interaction is regulated by the glycosylation pattern of CEACAM1 on cell types and regulates contact between dendritic cells and neutrophils.

Its subcellular location is the membrane. Functionally, pathogen-recognition receptor expressed on the surface of immature dendritic cells (DCs) and involved in initiation of primary immune response. Thought to mediate the endocytosis of pathogens which are subsequently degraded in lysosomal compartments. The receptor returns to the cell membrane surface and the pathogen-derived antigens are presented to resting T-cells via MHC class II proteins to initiate the adaptive immune response. Probably recognizes in a calcium-dependent manner high mannose N-linked oligosaccharides in a variety of pathogen antigens. Its function is as follows. On DCs it is a high affinity receptor for ICAM2 and ICAM3 by binding to mannose-like carbohydrates. May act as a DC rolling receptor that mediates transendothelial migration of DC presursors from blood to tissues by binding endothelial ICAM2. Seems to regulate DC-induced T-cell proliferation by binding to ICAM3 on T-cells in the immunological synapse formed between DC and T-cells. This Nomascus concolor (Black crested gibbon) protein is CD209 antigen (CD209).